We begin with the raw amino-acid sequence, 346 residues long: Phosphate acyltransferase (346 aa).

The protein belongs to the PlsX family. In terms of assembly, homodimer. Probably interacts with PlsY.

Its subcellular location is the cytoplasm. It catalyses the reaction a fatty acyl-[ACP] + phosphate = an acyl phosphate + holo-[ACP]. Its pathway is lipid metabolism; phospholipid metabolism. Catalyzes the reversible formation of acyl-phosphate (acyl-PO(4)) from acyl-[acyl-carrier-protein] (acyl-ACP). This enzyme utilizes acyl-ACP as fatty acyl donor, but not acyl-CoA. In Geobacter sulfurreducens (strain ATCC 51573 / DSM 12127 / PCA), this protein is Phosphate acyltransferase.